A 192-amino-acid polypeptide reads, in one-letter code: Protein hunchback (192 aa).

Disordered regions lie at residues 16 to 59 (SHHH…SNTN), 88 to 108 (AAMT…WPGL), and 151 to 192 (ALTP…KYMA). Residues 17–31 (HHHHHHHAHHSRRQH) are compositionally biased toward basic residues. Residues 92–103 (PSPSNNDQNSPL) are compositionally biased toward polar residues. Residues 173–192 (EPEKEHDLMSNSSEDMKYMA) show a composition bias toward basic and acidic residues.

The protein belongs to the hunchback C2H2-type zinc-finger protein family.

The protein localises to the nucleus. In terms of biological role, gap class segmentation protein that controls development of head structures. This is Protein hunchback (hb) from Drosophila adiastola (Fruit fly).